Reading from the N-terminus, the 517-residue chain is GMP synthase [glutamine-hydrolyzing] (517 aa).

Positions 9–199 constitute a Glutamine amidotransferase type-1 domain; that stretch reads RILILDFGSQ…VLNVCGCEGL (191 aa). Cysteine 86 functions as the Nucleophile in the catalytic mechanism. Active-site residues include histidine 173 and glutamate 175. Residues 200–392 form the GMPS ATP-PPase domain; sequence WTSASIIEDA…LGLPYNMLYR (193 aa). 227–233 contributes to the ATP binding site; the sequence is SGGVDSS.

As to quaternary structure, homodimer.

The enzyme catalyses XMP + L-glutamine + ATP + H2O = GMP + L-glutamate + AMP + diphosphate + 2 H(+). Its pathway is purine metabolism; GMP biosynthesis; GMP from XMP (L-Gln route): step 1/1. In terms of biological role, catalyzes the synthesis of GMP from XMP. The polypeptide is GMP synthase [glutamine-hydrolyzing] (Aliivibrio salmonicida (strain LFI1238) (Vibrio salmonicida (strain LFI1238))).